We begin with the raw amino-acid sequence, 360 residues long: MLLLLAEYLQQFHKGFAVFQYLSLRGILGVLTALVLSLWMGPWLIRTLQLRQIGQAVRTDGPQSHLSKSGTPTMGGALILSAIGISTLLWADLANRYVWVVLAVTLLFGAIGWVDDYRKVIEKNSRGLPSRWKYFWQSVFGLGAAIFLYMTAQTPVETTLILPLLKNIEIPLGIGFVILTYFVIVGSSNAVNLTDGLDGLAIMPTVMVGGGLGIFCYLSGNVNFAEYLLIPYIPGSGELIVFCGALIGAGLGFLWFNTYPAQVFMGDVGALALGAALGTIAVIVRQEVVLFIMGGVFVMETLSVMIQVASFKLTGKRVFRMAPIHHHFELKGWPEPRVIVRFWIITVILVLVGLATLKLR.

Helical transmembrane passes span 25–45 (RGIL…PWLI), 74–94 (MGGA…ADLA), 97–117 (YVWV…VDDY), 132–152 (WKYF…YMTA), 168–188 (IEIP…VGSS), 199–219 (GLAI…CYLS), 236–256 (SGEL…FLWF), 263–283 (VFMG…IAVI), 288–308 (VVLF…MIQV), and 338–358 (VIVR…ATLK).

Belongs to the glycosyltransferase 4 family. MraY subfamily. The cofactor is Mg(2+).

It is found in the cell inner membrane. It carries out the reaction UDP-N-acetyl-alpha-D-muramoyl-L-alanyl-gamma-D-glutamyl-meso-2,6-diaminopimeloyl-D-alanyl-D-alanine + di-trans,octa-cis-undecaprenyl phosphate = di-trans,octa-cis-undecaprenyl diphospho-N-acetyl-alpha-D-muramoyl-L-alanyl-D-glutamyl-meso-2,6-diaminopimeloyl-D-alanyl-D-alanine + UMP. It participates in cell wall biogenesis; peptidoglycan biosynthesis. In terms of biological role, catalyzes the initial step of the lipid cycle reactions in the biosynthesis of the cell wall peptidoglycan: transfers peptidoglycan precursor phospho-MurNAc-pentapeptide from UDP-MurNAc-pentapeptide onto the lipid carrier undecaprenyl phosphate, yielding undecaprenyl-pyrophosphoryl-MurNAc-pentapeptide, known as lipid I. This chain is Phospho-N-acetylmuramoyl-pentapeptide-transferase, found in Stutzerimonas stutzeri (strain A1501) (Pseudomonas stutzeri).